A 210-amino-acid chain; its full sequence is MNILLSSTLFVLLMFQIIGSGMGCDMKVRGLDANMKKMILDLHNKKRQIVANGQQSGQPSAANMKELHWNDEIAANAQRSAETCVFEHTAKSLRKTTKYSYLGENIYKGSYPDPIPRSVNAWYDEVKDVTPAVVKSFSSGGPMIGHYTQMVWANTEALGCGLVTASDRNSYLFCQYGPGGNYRSQPIYKQGPPASDCKNGKSSKYPGLCN.

The N-terminal stretch at 1–23 (MNILLSSTLFVLLMFQIIGSGMG) is a signal peptide.

Contains 3 disulfide bonds. As to expression, expressed by the venom gland.

Its subcellular location is the secreted. Voltage-gated calcium channel inhibitor. The protein is Scoloptoxin SSD976 of Scolopendra dehaani (Thai centipede).